The following is a 597-amino-acid chain: 2-isopropylmalate synthase (597 aa).

The interval 1–80 (MQLDIDRLVA…QKNESLERTE (80 aa)) is unknown. Residues 87–349 (VIIFDTTLRD…ETGIDTTQIV (263 aa)) enclose the Pyruvate carboxyltransferase domain. A 2-isopropylmalate synthase region spans residues 87-349 (VIIFDTTLRD…ETGIDTTQIV (263 aa)). The Mn(2+) site is built by aspartate 96, histidine 284, histidine 286, and asparagine 320. Residues 475 to 597 (KFISQKISTE…KPKAQGSGTI (123 aa)) are regulatory domain.

Belongs to the alpha-IPM synthase/homocitrate synthase family. LeuA type 1 subfamily. As to quaternary structure, homodimer. It depends on Mn(2+) as a cofactor.

The protein resides in the cytoplasm. It catalyses the reaction 3-methyl-2-oxobutanoate + acetyl-CoA + H2O = (2S)-2-isopropylmalate + CoA + H(+). Its pathway is amino-acid biosynthesis; L-leucine biosynthesis; L-leucine from 3-methyl-2-oxobutanoate: step 1/4. Its function is as follows. Catalyzes the condensation of the acetyl group of acetyl-CoA with 3-methyl-2-oxobutanoate (2-ketoisovalerate) to form 3-carboxy-3-hydroxy-4-methylpentanoate (2-isopropylmalate). In Neisseria gonorrhoeae (strain ATCC 700825 / FA 1090), this protein is 2-isopropylmalate synthase.